Reading from the N-terminus, the 718-residue chain is Myeloperoxidase (718 aa).

Residues 1-15 form the signal peptide; sequence MKLLLALAGLLAPLA. Positions 16 to 138 are excised as a propeptide; it reads MLQTSNGATP…SSGCAYQDVR (123 aa). Residue Asn113 is glycosylated (N-linked (GlcNAc...) asparagine). Cys141 and Cys154 form a disulfide bridge. Asp234 provides a ligand contact to heme b. Catalysis depends on His235, which acts as the Proton acceptor. Residue Asp236 coordinates Ca(2+). Disulfide bonds link Cys255/Cys265 and Cys259/Cys283. Position 290 is a cysteine sulfenic acid (-SOH) (Cys290). The N-linked (GlcNAc...) asparagine glycan is linked to Asn297. Residues Thr308, Phe310, Asp312, and Ser314 each coordinate Ca(2+). N-linked (GlcNAc...) asparagine glycans are attached at residues Asn329 and Asn365. Cys361 and Cys372 are oxidised to a cystine. Positions 382 and 383 each coordinate heme b. Residue Asn457 is glycosylated (N-linked (GlcNAc...) asparagine). Residue His476 coordinates heme b. Disulfide bonds link Cys580/Cys637 and Cys678/Cys704. Asn711 carries N-linked (GlcNAc...) asparagine glycosylation.

The protein belongs to the peroxidase family. XPO subfamily. As to quaternary structure, homodimer; disulfide-linked. Each monomer consists of a light and a heavy chain. Found in a complex with CP and LTF; interacts directly with CP, which protects CP antioxidant properties by MPO. Ca(2+) is required as a cofactor. It depends on heme b as a cofactor.

The protein localises to the lysosome. It catalyses the reaction chloride + H2O2 + H(+) = hypochlorous acid + H2O. Functionally, part of the host defense system of polymorphonuclear leukocytes. It is responsible for microbicidal activity against a wide range of organisms. In the stimulated PMN, MPO catalyzes the production of hypohalous acids, primarily hypochlorous acid in physiologic situations, and other toxic intermediates that greatly enhance PMN microbicidal activity. Mediates the proteolytic cleavage of alpha-1-microglobulin to form t-alpha-1-microglobulin, which potently inhibits oxidation of low density lipoprotein particles and limits vascular damage. The chain is Myeloperoxidase (Mpo) from Mus musculus (Mouse).